The primary structure comprises 427 residues: Serine--tRNA ligase (427 aa).

231 to 233 (TAE) lines the L-serine pocket. Residue 262–264 (RSE) coordinates ATP. L-serine is bound at residue glutamate 285. 349-352 (EISS) is a binding site for ATP. L-serine is bound at residue serine 385.

This sequence belongs to the class-II aminoacyl-tRNA synthetase family. Type-1 seryl-tRNA synthetase subfamily. As to quaternary structure, homodimer. The tRNA molecule binds across the dimer.

It is found in the cytoplasm. The catalysed reaction is tRNA(Ser) + L-serine + ATP = L-seryl-tRNA(Ser) + AMP + diphosphate + H(+). The enzyme catalyses tRNA(Sec) + L-serine + ATP = L-seryl-tRNA(Sec) + AMP + diphosphate + H(+). Its pathway is aminoacyl-tRNA biosynthesis; selenocysteinyl-tRNA(Sec) biosynthesis; L-seryl-tRNA(Sec) from L-serine and tRNA(Sec): step 1/1. Its function is as follows. Catalyzes the attachment of serine to tRNA(Ser). Is also able to aminoacylate tRNA(Sec) with serine, to form the misacylated tRNA L-seryl-tRNA(Sec), which will be further converted into selenocysteinyl-tRNA(Sec). This chain is Serine--tRNA ligase, found in Listeria innocua serovar 6a (strain ATCC BAA-680 / CLIP 11262).